The chain runs to 575 residues: MASWLRRKLRGKRRPVIAFCLLMILSAMAVTRFPPQRPSAGPDPGPMEPQGVTGAPATHIRQALSSSRRQRARNMGFWRSRALPRNSILVCAEEQGHRARVDRSRESPGGDLRHPGRVRRDITLSGHPRLSTQHVVLLREDEVGDPGTKDLGHPQHGSPIQETQSEVVTLVSPLPGSDMAALPAWRATSGLTLWPHTAEGRDLLGAENRALTGGQQAEDPTLASGAHQWPGSVEKLQGSVWCDAETLLSSSRTGGQAPPWLTDHDVQMLRLLAQGEVVDKARVPAHGQVLQVGFSTEAALQDLSSPRLSQLCSQGLCGLIKRPGDLPEVLSFHVDRVLGLRRSLPAVARRFHSPLLPYRYTDGGARPVIWWAPDVQHLSDPDEDQNSLALGWLQYQALLAHSCNWPGQAPCPGIHHTEWARLALFDFLLQVHDRLDRYCCGFEPEPSDPCVEERLREKCQNPAELRLVHILVRSSDPSHLVYIDNAGNLQHPEDKLNFRLLEGIDGFPESAVKVLASGCLQNMLLKSLQMDPVFWESQGGAQGLKQVLQTLEQRGQVLLGHIQKHNLTLFRDEDP.

An N-terminal signal peptide occupies residues 1–29; it reads MASWLRRKLRGKRRPVIAFCLLMILSAMA. The propeptide at 30-119 is removed in mature form; it reads VTRFPPQRPS…GDLRHPGRVR (90 aa). An O-glycosylated at one site region spans residues 53-58; that stretch reads TGAPAT. Positions 143 to 153 are enriched in basic and acidic residues; that stretch reads VGDPGTKDLGH. The interval 143 to 162 is disordered; the sequence is VGDPGTKDLGHPQHGSPIQE. Residues 437–575 constitute a propeptide, removed in mature form; it reads RYCCGFEPEP…NLTLFRDEDP (139 aa). A glycan (N-linked (GlcNAc...) asparagine) is linked at Asn566.

It belongs to the GASK family. O-glycosylated with core 1 or possibly core 8 glycans. Post-translationally, proteolytically cleaved. Cleaved at Arg-120 and Arg-437 leading to a processed mature product of 35 kDa. The cleavage takes place in the Golgi apparatus. In terms of tissue distribution, expressed in skin, lung and colon (at protein level).

The protein localises to the secreted. Its subcellular location is the endoplasmic reticulum. The protein resides in the golgi apparatus. It localises to the membrane. It is found in the caveola. This Homo sapiens (Human) protein is Golgi-associated kinase 1A.